A 176-amino-acid chain; its full sequence is Transcription termination/antitermination protein NusG (176 aa).

One can recognise a KOW domain in the interval 125–149 (GEVVRVVEGPFANFTATVEEYDVEH).

Belongs to the NusG family.

Its function is as follows. Participates in transcription elongation, termination and antitermination. This Helicobacter pylori (strain ATCC 700392 / 26695) (Campylobacter pylori) protein is Transcription termination/antitermination protein NusG.